Here is a 368-residue protein sequence, read N- to C-terminus: MAVVDVSEELKSLSSTMESIEAVLDLDKLRADIAVLEEQAAAPSLWDDPEAAQKITSKLSHLQAEVRKAEALRGRIDDLSVLFEMAEEEDDPDTRAEAESELTAVKKALDEMEVRTLLSGEYDSREALVNIRAEAGGVDAADFAEKLQRMYLRWAEQRGYKTEIYETSYAEEAGIKSTTFAVQVPYAYGTLSVEQGTHRLVRISPFDNQGRRQTSFAGVEILPVVETTDHIEIDESELRVDVYRSSGPGGQGVNTTDSAVRLTHLPTGIVVSCQNERSQIQNKASAMNVLQAKLLDRRRQEEQAKMDALKGDGGNSWGNQMRSYVLHPYQMVKDLRTEYEVGNPEAVFNGEIEGFLEAGIRWRKQQEK.

Position 251 is an N5-methylglutamine (Q251).

The protein belongs to the prokaryotic/mitochondrial release factor family. Methylated by PrmC. Methylation increases the termination efficiency of RF2.

Its subcellular location is the cytoplasm. Peptide chain release factor 2 directs the termination of translation in response to the peptide chain termination codons UGA and UAA. The polypeptide is Peptide chain release factor 2 (Streptomyces avermitilis (strain ATCC 31267 / DSM 46492 / JCM 5070 / NBRC 14893 / NCIMB 12804 / NRRL 8165 / MA-4680)).